The following is a 276-amino-acid chain: Ribosomal RNA small subunit methyltransferase A (276 aa).

6 residues coordinate S-adenosyl-L-methionine: N28, L30, G55, E77, D103, and N124.

It belongs to the class I-like SAM-binding methyltransferase superfamily. rRNA adenine N(6)-methyltransferase family. RsmA subfamily.

It is found in the cytoplasm. It catalyses the reaction adenosine(1518)/adenosine(1519) in 16S rRNA + 4 S-adenosyl-L-methionine = N(6)-dimethyladenosine(1518)/N(6)-dimethyladenosine(1519) in 16S rRNA + 4 S-adenosyl-L-homocysteine + 4 H(+). Specifically dimethylates two adjacent adenosines (A1518 and A1519) in the loop of a conserved hairpin near the 3'-end of 16S rRNA in the 30S particle. May play a critical role in biogenesis of 30S subunits. This is Ribosomal RNA small subunit methyltransferase A from Agrobacterium fabrum (strain C58 / ATCC 33970) (Agrobacterium tumefaciens (strain C58)).